The sequence spans 244 residues: Aspartate/glutamate leucyltransferase (244 aa).

Belongs to the R-transferase family. Bpt subfamily.

Its subcellular location is the cytoplasm. It carries out the reaction N-terminal L-glutamyl-[protein] + L-leucyl-tRNA(Leu) = N-terminal L-leucyl-L-glutamyl-[protein] + tRNA(Leu) + H(+). The enzyme catalyses N-terminal L-aspartyl-[protein] + L-leucyl-tRNA(Leu) = N-terminal L-leucyl-L-aspartyl-[protein] + tRNA(Leu) + H(+). In terms of biological role, functions in the N-end rule pathway of protein degradation where it conjugates Leu from its aminoacyl-tRNA to the N-termini of proteins containing an N-terminal aspartate or glutamate. This Paramagnetospirillum magneticum (strain ATCC 700264 / AMB-1) (Magnetospirillum magneticum) protein is Aspartate/glutamate leucyltransferase.